We begin with the raw amino-acid sequence, 640 residues long: Chaperone protein HtpG (640 aa).

Residues 1–348 (MAQYKFETEV…SEDLPLNVSR (348 aa)) are a; substrate-binding. The tract at residues 349–565 (EILQQNRILS…ETDPSLQMER (217 aa)) is b. Residues 566 to 640 (MMRAMGQFNT…RLNRLMTNLK (75 aa)) are c.

It belongs to the heat shock protein 90 family. In terms of assembly, homodimer.

It is found in the cytoplasm. Its function is as follows. Molecular chaperone. Has ATPase activity. This Treponema denticola (strain ATCC 35405 / DSM 14222 / CIP 103919 / JCM 8153 / KCTC 15104) protein is Chaperone protein HtpG.